Consider the following 63-residue polypeptide: DNA-directed RNA polymerase subunit omega (63 aa).

It belongs to the RNA polymerase subunit omega family. The RNAP catalytic core consists of 2 alpha, 1 beta, 1 beta' and 1 omega subunit. When a sigma factor is associated with the core the holoenzyme is formed, which can initiate transcription.

The catalysed reaction is RNA(n) + a ribonucleoside 5'-triphosphate = RNA(n+1) + diphosphate. Functionally, promotes RNA polymerase assembly. Latches the N- and C-terminal regions of the beta' subunit thereby facilitating its interaction with the beta and alpha subunits. The polypeptide is DNA-directed RNA polymerase subunit omega (Blochmanniella pennsylvanica (strain BPEN)).